A 336-amino-acid chain; its full sequence is Ferrochelatase (336 aa).

Residues histidine 206 and glutamate 287 each contribute to the Fe cation site.

Belongs to the ferrochelatase family.

The protein localises to the cytoplasm. It catalyses the reaction heme b + 2 H(+) = protoporphyrin IX + Fe(2+). The protein operates within porphyrin-containing compound metabolism; protoheme biosynthesis; protoheme from protoporphyrin-IX: step 1/1. Functionally, catalyzes the ferrous insertion into protoporphyrin IX. This chain is Ferrochelatase, found in Neisseria meningitidis serogroup B (strain ATCC BAA-335 / MC58).